Consider the following 374-residue polypeptide: MSIDNSKTRVVVGMSGGVDSSVTALLLKEQGYDVIGIFMKNWDDTDENGFCTATEDYKDVAAVADQIGIPYYSVNFEKEYWDRVFEYFLAEYRAGRTPNPDVMCNKEIKFKAFLDYAMNLGADYVATGHYAQVTRDEDGTVHMLRGADNGKDQTYFLSQLSQEQLQKTMFPLGHLQKPQVREIAERAGLATAKKKDSTGICFIGEKNFKEFLGQYLPAQPGRMMTVDGRDMGEHTGLMYYTIGQRGGLGIGGQIGGDNEPWFVVGKDLSKNILYVGQGFYHESLMSTSLQASQVHFTRDMPEEFTLECTAKFRYRQPDSQVTVKVKGDKAEVIFAEPQRAITPGQAVVFYDGQECLGGGMIDMAYKDGEACQYI.

ATP contacts are provided by residues 13–20 and Met-39; that span reads GMSGGVDS. Residues 99 to 101 form an interaction with target base in tRNA region; that stretch reads NPD. Residue Cys-104 is the Nucleophile of the active site. A disulfide bridge connects residues Cys-104 and Cys-201. Gly-128 lines the ATP pocket. The segment at 151–153 is interaction with tRNA; that stretch reads KDQ. Cys-201 serves as the catalytic Cysteine persulfide intermediate. The segment at 313-314 is interaction with tRNA; it reads RY.

This sequence belongs to the MnmA/TRMU family.

Its subcellular location is the cytoplasm. The enzyme catalyses S-sulfanyl-L-cysteinyl-[protein] + uridine(34) in tRNA + AH2 + ATP = 2-thiouridine(34) in tRNA + L-cysteinyl-[protein] + A + AMP + diphosphate + H(+). Catalyzes the 2-thiolation of uridine at the wobble position (U34) of tRNA, leading to the formation of s(2)U34. This Streptococcus suis (strain 98HAH33) protein is tRNA-specific 2-thiouridylase MnmA.